A 231-amino-acid chain; its full sequence is 2,3-bisphosphoglycerate-dependent phosphoglycerate mutase (231 aa).

Residues Arg10–Asn17, Thr23–Gly24, Arg62, Glu89–Tyr92, Lys100, Arg116–Arg117, and Gly185–Asn186 each bind substrate. The active-site Tele-phosphohistidine intermediate is His11. The Proton donor/acceptor role is filled by Glu89.

The protein belongs to the phosphoglycerate mutase family. BPG-dependent PGAM subfamily. As to quaternary structure, homodimer.

The enzyme catalyses (2R)-2-phosphoglycerate = (2R)-3-phosphoglycerate. Its pathway is carbohydrate degradation; glycolysis; pyruvate from D-glyceraldehyde 3-phosphate: step 3/5. In terms of biological role, catalyzes the interconversion of 2-phosphoglycerate and 3-phosphoglycerate. The chain is 2,3-bisphosphoglycerate-dependent phosphoglycerate mutase from Buchnera aphidicola subsp. Acyrthosiphon pisum (strain APS) (Acyrthosiphon pisum symbiotic bacterium).